The following is a 136-amino-acid chain: MRHKIKSRKLNVTSSHRQAMLANMAVALVTHEQIKTTLPKAKELRPYIETLITKAKKADLMVRRSVLSKIKDKTAVEKLINILGIRYKDRPGGYTRIIKAGFRYGDLAPIAYIEFVDRDINAKGNIQQDANEEIKN.

It belongs to the bacterial ribosomal protein bL17 family. Part of the 50S ribosomal subunit. Contacts protein L32.

This chain is Large ribosomal subunit protein bL17, found in Rickettsia africae (strain ESF-5).